The primary structure comprises 117 residues: NADH-ubiquinone oxidoreductase chain 3 (117 aa).

3 helical membrane passes run 4-24 (IIII…LASI), 60-80 (ITII…MIII), and 86-106 (IMIW…GLYH).

This sequence belongs to the complex I subunit 3 family.

Its subcellular location is the mitochondrion membrane. The enzyme catalyses a ubiquinone + NADH + 5 H(+)(in) = a ubiquinol + NAD(+) + 4 H(+)(out). Functionally, core subunit of the mitochondrial membrane respiratory chain NADH dehydrogenase (Complex I) that is believed to belong to the minimal assembly required for catalysis. Complex I functions in the transfer of electrons from NADH to the respiratory chain. The immediate electron acceptor for the enzyme is believed to be ubiquinone. This is NADH-ubiquinone oxidoreductase chain 3 (mt:ND3) from Drosophila yakuba (Fruit fly).